An 87-amino-acid chain; its full sequence is Sec-independent protein translocase protein TatA (87 aa).

The chain crosses the membrane as a helical span at residues 1-21 (MGSFSIWHWLIVLLIVVMVFG). The tract at residues 40-87 (KDGMKDGSTPEGTPASTTAATPPAGQVTNQQAHAADPGTIDVEAKHKG) is disordered. Residues 46-64 (GSTPEGTPASTTAATPPAG) are compositionally biased toward low complexity.

This sequence belongs to the TatA/E family. In terms of assembly, the Tat system comprises two distinct complexes: a TatABC complex, containing multiple copies of TatA, TatB and TatC subunits, and a separate TatA complex, containing only TatA subunits. Substrates initially bind to the TatABC complex, which probably triggers association of the separate TatA complex to form the active translocon.

It localises to the cell inner membrane. Functionally, part of the twin-arginine translocation (Tat) system that transports large folded proteins containing a characteristic twin-arginine motif in their signal peptide across membranes. TatA could form the protein-conducting channel of the Tat system. The protein is Sec-independent protein translocase protein TatA of Paracidovorax citrulli (strain AAC00-1) (Acidovorax citrulli).